Reading from the N-terminus, the 81-residue chain is Small ribosomal subunit protein bS16 (81 aa).

Belongs to the bacterial ribosomal protein bS16 family.

The sequence is that of Small ribosomal subunit protein bS16 from Lachnoclostridium phytofermentans (strain ATCC 700394 / DSM 18823 / ISDg) (Clostridium phytofermentans).